Consider the following 198-residue polypeptide: Thymidine kinase (198 aa).

ATP-binding positions include 9–16 (GTMNSGKS) and 85–88 (DEAQ). Glu-86 functions as the Proton acceptor in the catalytic mechanism. Zn(2+)-binding residues include Cys-143, Cys-146, Cys-180, and His-183.

The protein belongs to the thymidine kinase family. In terms of assembly, homotetramer.

The protein localises to the cytoplasm. The catalysed reaction is thymidine + ATP = dTMP + ADP + H(+). In Streptococcus thermophilus (strain ATCC BAA-250 / LMG 18311), this protein is Thymidine kinase.